A 349-amino-acid polypeptide reads, in one-letter code: NADH-quinone oxidoreductase subunit H (349 aa).

8 helical membrane-spanning segments follow: residues 19–39 (VWTL…VAYL), 88–108 (GLFI…WAVV), 123–143 (LLFL…AGWA), 161–181 (VSYE…SASL), 202–222 (FLSW…ISGI), 249–269 (GMAF…VSIL), 284–304 (FLPD…FVFL), and 325–345 (VFIP…MSPL).

The protein belongs to the complex I subunit 1 family. As to quaternary structure, NDH-1 is composed of 14 different subunits. Subunits NuoA, H, J, K, L, M, N constitute the membrane sector of the complex.

Its subcellular location is the cell inner membrane. The catalysed reaction is a quinone + NADH + 5 H(+)(in) = a quinol + NAD(+) + 4 H(+)(out). Functionally, NDH-1 shuttles electrons from NADH, via FMN and iron-sulfur (Fe-S) centers, to quinones in the respiratory chain. The immediate electron acceptor for the enzyme in this species is believed to be ubiquinone. Couples the redox reaction to proton translocation (for every two electrons transferred, four hydrogen ions are translocated across the cytoplasmic membrane), and thus conserves the redox energy in a proton gradient. This subunit may bind ubiquinone. This is NADH-quinone oxidoreductase subunit H from Aromatoleum aromaticum (strain DSM 19018 / LMG 30748 / EbN1) (Azoarcus sp. (strain EbN1)).